Here is a 361-residue protein sequence, read N- to C-terminus: Putative F-box protein At3g19560 (361 aa).

The 47-residue stretch at 3-49 (MTMMSDISQDLLEEILSRVPITSLRAVKSTCKRWKDLLNDPSFSKKY) folds into the F-box domain.

This is Putative F-box protein At3g19560 from Arabidopsis thaliana (Mouse-ear cress).